The primary structure comprises 358 residues: Phospho-N-acetylmuramoyl-pentapeptide-transferase (358 aa).

The next 10 helical transmembrane spans lie at 28 to 48 (WALATALLVSIVVGPRFIAWL), 72 to 92 (TMGGLLIGFAVTFSVLLWADL), 96 to 116 (YIWLTLLVFTGFGFIGFLDDY), 133 to 153 (FLWQVGVAVAAMYLLVQLPAY), 164 to 184 (GLTPDLGWLYIPFAVAVMVGS), 196 to 216 (GLAIGPTIVAGIVFSIFIYVA), 233 to 253 (VGEVAVFCGALVGAGLGFLWF), 260 to 280 (VFMGDVGSLSLGGTLGFLAVL), 285 to 305 (LLLLVVGGLFVVETLSVILQV), and 335 to 355 (KIIIRFWITSALLGLIALSVL).

Belongs to the glycosyltransferase 4 family. MraY subfamily. It depends on Mg(2+) as a cofactor.

It localises to the cell inner membrane. The enzyme catalyses UDP-N-acetyl-alpha-D-muramoyl-L-alanyl-gamma-D-glutamyl-meso-2,6-diaminopimeloyl-D-alanyl-D-alanine + di-trans,octa-cis-undecaprenyl phosphate = di-trans,octa-cis-undecaprenyl diphospho-N-acetyl-alpha-D-muramoyl-L-alanyl-D-glutamyl-meso-2,6-diaminopimeloyl-D-alanyl-D-alanine + UMP. It functions in the pathway cell wall biogenesis; peptidoglycan biosynthesis. In terms of biological role, catalyzes the initial step of the lipid cycle reactions in the biosynthesis of the cell wall peptidoglycan: transfers peptidoglycan precursor phospho-MurNAc-pentapeptide from UDP-MurNAc-pentapeptide onto the lipid carrier undecaprenyl phosphate, yielding undecaprenyl-pyrophosphoryl-MurNAc-pentapeptide, known as lipid I. The chain is Phospho-N-acetylmuramoyl-pentapeptide-transferase from Nitratidesulfovibrio vulgaris (strain ATCC 29579 / DSM 644 / CCUG 34227 / NCIMB 8303 / VKM B-1760 / Hildenborough) (Desulfovibrio vulgaris).